The primary structure comprises 279 residues: Diaminopimelate epimerase (279 aa).

Asn11 and Asn72 together coordinate substrate. The active-site Proton donor is Cys81. Residues Gly82–Asn83, Asn187, and Glu205–Arg206 each bind substrate. The Proton acceptor role is filled by Cys215. Gly216–Thr217 contributes to the substrate binding site.

It belongs to the diaminopimelate epimerase family. Homodimer.

It is found in the cytoplasm. The catalysed reaction is (2S,6S)-2,6-diaminopimelate = meso-2,6-diaminopimelate. It functions in the pathway amino-acid biosynthesis; L-lysine biosynthesis via DAP pathway; DL-2,6-diaminopimelate from LL-2,6-diaminopimelate: step 1/1. In terms of biological role, catalyzes the stereoinversion of LL-2,6-diaminopimelate (L,L-DAP) to meso-diaminopimelate (meso-DAP), a precursor of L-lysine and an essential component of the bacterial peptidoglycan. This is Diaminopimelate epimerase from Aquifex aeolicus (strain VF5).